A 461-amino-acid polypeptide reads, in one-letter code: ERBB receptor feedback inhibitor 1 (461 aa).

S2 bears the N-acetylserine mark. A phosphothreonine mark is found at T126 and T130. A disordered region spans residues 228-353; sequence QNRVVPDPNP…VMPPTQSFAP (126 aa). Phosphoserine occurs at positions 251 and 272. The span at 265-274 shows a compositional bias: polar residues; the sequence is SSCTHRASPS. The segment covering 283–292 has biased composition (pro residues); that stretch reads PPRVPIPPRP. S301 carries the post-translational modification Phosphoserine. The span at 311–324 shows a compositional bias: basic and acidic residues; it reads DEDRPPKVPPREPL. A compositionally biased stretch (polar residues) spans 325–336; it reads SRSNSRTPSPKS. Positions 333–362 are interaction with EGFR and ERBB2 and regulation of EGFR activation; the sequence is SPKSLPSYLNGVMPPTQSFAPDPKYVSSKA. S460 carries the phosphoserine modification.

This sequence belongs to the MIG6 family. In terms of assembly, interacts with EGFR. Interacts with ERBB2. Detected in lung, in airway epithelial cells and alveolar type 2 cells (at protein level). Detected in uterus stroma, luminal epithelium and glandular epithelium.

Its subcellular location is the cytoplasm. The protein resides in the cell membrane. The protein localises to the nucleus. Functionally, negative regulator of EGFR signaling in skin morphogenesis. Acts as a negative regulator for several EGFR family members, including ERBB2, ERBB3 and ERBB4. Inhibits EGFR catalytic activity by interfering with its dimerization. Inhibits autophosphorylation of EGFR, ERBB2 and ERBB4. Important for normal keratinocyte proliferation and differentiation. Plays a role in modulating the response to steroid hormones in the uterus. Required for normal response to progesterone in the uterus and for fertility. Mediates epithelial estrogen responses in the uterus by regulating ESR1 levels and activation. Important for regulation of endometrium cell proliferation. Important for normal prenatal and perinatal lung development. This Mus musculus (Mouse) protein is ERBB receptor feedback inhibitor 1 (Errfi1).